The sequence spans 788 residues: Protein TRS1 (788 aa).

Disordered regions lie at residues 1–82 (MAQR…NFWH) and 610–663 (IHKK…PSRV). The segment covering 16-25 (RGRGAGGPSG) has biased composition (gly residues). A compositionally biased stretch (low complexity) spans 26-56 (VGSSPPSSCVPMGATSTAGTGASAAPTATPG). The tract at residues 74 to 248 (SGNNSNFWHG…HGAGEVVRLY (175 aa)) is RNA-binding. The span at 651–660 (LRRDDEDWKP) shows a compositional bias: basic and acidic residues. The tract at residues 672–788 (LDETFWVLGS…NVATHYHYNA (117 aa)) is interaction with host EIF2AK2/PKR.

The protein belongs to the herpesviridae US22 family. In terms of assembly, interacts with host EIF2AK2/PKR; this interaction retains EIF2AK2 to the host nucleus and prevents its activation. Interaction (via N-terminus) with host BECN1; this interaction inhibits host autophagy. Interacts with the viral DNA polymerase accessory subunit UL44. Interacts with host HSPA5.

The protein localises to the virion. It is found in the host cytoplasm. Its subcellular location is the host nucleus. Its function is as follows. Inhibits the establishment of the antiviral state in the infected cell. Prevents the phosphorylation of the host eukaryotic translation initiation factor eIF-2alpha/EIF2S1 and thus the shutoff of viral and cellular protein synthesis by directly interacting with EIF2AK2/PKR. Prevents stress granule formation in response to eIF-2alpha/EIF2S1 phosphorylation, thereby rescuing viral replication and protein synthesis. Also inhibits host autophagy by interacting with host Beclin-1/BECN1. The chain is Protein TRS1 (TRS1) from Human cytomegalovirus (strain Merlin) (HHV-5).